The following is a 151-amino-acid chain: Chromophore lyase CpcS/CpeS homolog (151 aa).

The protein belongs to the CpcS/CpeS biliprotein lyase family.

The protein resides in the plastid. Its subcellular location is the chloroplast. In terms of biological role, might function to covalently attach a chromophore to Cys residue(s) of phycobiliproteins. The sequence is that of Chromophore lyase CpcS/CpeS homolog from Gracilaria tenuistipitata var. liui (Red alga).